Here is a 689-residue protein sequence, read N- to C-terminus: Glycine--tRNA ligase beta subunit (689 aa).

Belongs to the class-II aminoacyl-tRNA synthetase family. In terms of assembly, tetramer of two alpha and two beta subunits.

The protein localises to the cytoplasm. It carries out the reaction tRNA(Gly) + glycine + ATP = glycyl-tRNA(Gly) + AMP + diphosphate. This Aeromonas hydrophila subsp. hydrophila (strain ATCC 7966 / DSM 30187 / BCRC 13018 / CCUG 14551 / JCM 1027 / KCTC 2358 / NCIMB 9240 / NCTC 8049) protein is Glycine--tRNA ligase beta subunit.